A 349-amino-acid polypeptide reads, in one-letter code: Protein-glutamate methylesterase/protein-glutamine glutaminase (349 aa).

Residues 5–122 (RVLSVDDSAL…REGMLAYSEM (118 aa)) form the Response regulatory domain. Position 56 is a 4-aspartylphosphate (aspartate 56). Positions 152–344 (LLSSEKLIAI…QQMLAKISAG (193 aa)) constitute a CheB-type methylesterase domain. Catalysis depends on residues serine 164, histidine 190, and aspartate 286.

The protein belongs to the CheB family. In terms of processing, phosphorylated by CheA. Phosphorylation of the N-terminal regulatory domain activates the methylesterase activity.

Its subcellular location is the cytoplasm. It catalyses the reaction [protein]-L-glutamate 5-O-methyl ester + H2O = L-glutamyl-[protein] + methanol + H(+). The enzyme catalyses L-glutaminyl-[protein] + H2O = L-glutamyl-[protein] + NH4(+). Functionally, involved in chemotaxis. Part of a chemotaxis signal transduction system that modulates chemotaxis in response to various stimuli. Catalyzes the demethylation of specific methylglutamate residues introduced into the chemoreceptors (methyl-accepting chemotaxis proteins or MCP) by CheR. Also mediates the irreversible deamidation of specific glutamine residues to glutamic acid. This chain is Protein-glutamate methylesterase/protein-glutamine glutaminase, found in Salmonella paratyphi A (strain ATCC 9150 / SARB42).